A 498-amino-acid chain; its full sequence is 3-octaprenyl-4-hydroxybenzoate carboxy-lyase (498 aa).

Residue asparagine 175 participates in Mn(2+) binding. Residues 178–180 (IYR), 192–194 (RWL), and 197–198 (RG) contribute to the prenylated FMN site. Glutamate 241 provides a ligand contact to Mn(2+). The active-site Proton donor is the aspartate 290.

This sequence belongs to the UbiD family. As to quaternary structure, homohexamer. Requires prenylated FMN as cofactor. Mn(2+) is required as a cofactor.

It localises to the cell membrane. It carries out the reaction a 4-hydroxy-3-(all-trans-polyprenyl)benzoate + H(+) = a 2-(all-trans-polyprenyl)phenol + CO2. It functions in the pathway cofactor biosynthesis; ubiquinone biosynthesis. Its function is as follows. Catalyzes the decarboxylation of 3-octaprenyl-4-hydroxy benzoate to 2-octaprenylphenol, an intermediate step in ubiquinone biosynthesis. This Yersinia pestis bv. Antiqua (strain Antiqua) protein is 3-octaprenyl-4-hydroxybenzoate carboxy-lyase.